Here is a 95-residue protein sequence, read N- to C-terminus: Aspartyl/glutamyl-tRNA(Asn/Gln) amidotransferase subunit C (95 aa).

The protein belongs to the GatC family. Heterotrimer of A, B and C subunits.

The enzyme catalyses L-glutamyl-tRNA(Gln) + L-glutamine + ATP + H2O = L-glutaminyl-tRNA(Gln) + L-glutamate + ADP + phosphate + H(+). It carries out the reaction L-aspartyl-tRNA(Asn) + L-glutamine + ATP + H2O = L-asparaginyl-tRNA(Asn) + L-glutamate + ADP + phosphate + 2 H(+). Its function is as follows. Allows the formation of correctly charged Asn-tRNA(Asn) or Gln-tRNA(Gln) through the transamidation of misacylated Asp-tRNA(Asn) or Glu-tRNA(Gln) in organisms which lack either or both of asparaginyl-tRNA or glutaminyl-tRNA synthetases. The reaction takes place in the presence of glutamine and ATP through an activated phospho-Asp-tRNA(Asn) or phospho-Glu-tRNA(Gln). This Anaeromyxobacter sp. (strain Fw109-5) protein is Aspartyl/glutamyl-tRNA(Asn/Gln) amidotransferase subunit C.